A 228-amino-acid polypeptide reads, in one-letter code: Cytochrome c oxidase subunit 2 (228 aa).

The Mitochondrial intermembrane segment spans residues 1–26; the sequence is MTTWANMNLQDSASPIMEQLIYFHDH. A helical transmembrane segment spans residues 27-48; that stretch reads ALMIIIMILMVVSYMMIAMVFN. Over 49–62 the chain is Mitochondrial matrix; sequence KYINRFLLEGQMIE. A helical transmembrane segment spans residues 63-82; sequence LAWTIAPAVILIFIAVPSLR. Residues 83–228 lie on the Mitochondrial intermembrane side of the membrane; the sequence is LLYLMDEINT…FINWILKMNM (146 aa). Cu cation contacts are provided by H161, C196, E198, C200, H204, and M207. E198 is a binding site for Mg(2+).

The protein belongs to the cytochrome c oxidase subunit 2 family. Component of the cytochrome c oxidase (complex IV, CIV), a multisubunit enzyme composed of a catalytic core of 3 subunits and several supernumerary subunits. The complex exists as a monomer or a dimer and forms supercomplexes (SCs) in the inner mitochondrial membrane with ubiquinol-cytochrome c oxidoreductase (cytochrome b-c1 complex, complex III, CIII). Cu cation is required as a cofactor.

It is found in the mitochondrion inner membrane. It carries out the reaction 4 Fe(II)-[cytochrome c] + O2 + 8 H(+)(in) = 4 Fe(III)-[cytochrome c] + 2 H2O + 4 H(+)(out). Component of the cytochrome c oxidase, the last enzyme in the mitochondrial electron transport chain which drives oxidative phosphorylation. The respiratory chain contains 3 multisubunit complexes succinate dehydrogenase (complex II, CII), ubiquinol-cytochrome c oxidoreductase (cytochrome b-c1 complex, complex III, CIII) and cytochrome c oxidase (complex IV, CIV), that cooperate to transfer electrons derived from NADH and succinate to molecular oxygen, creating an electrochemical gradient over the inner membrane that drives transmembrane transport and the ATP synthase. Cytochrome c oxidase is the component of the respiratory chain that catalyzes the reduction of oxygen to water. Electrons originating from reduced cytochrome c in the intermembrane space (IMS) are transferred via the dinuclear copper A center (CU(A)) of subunit 2 and heme A of subunit 1 to the active site in subunit 1, a binuclear center (BNC) formed by heme A3 and copper B (CU(B)). The BNC reduces molecular oxygen to 2 water molecules using 4 electrons from cytochrome c in the IMS and 4 protons from the mitochondrial matrix. The protein is Cytochrome c oxidase subunit 2 (COII) of Periplaneta americana (American cockroach).